The following is a 457-amino-acid chain: tRNA modification GTPase MnmE (457 aa).

Residues arginine 25, glutamate 87, and arginine 126 each coordinate (6S)-5-formyl-5,6,7,8-tetrahydrofolate. One can recognise a TrmE-type G domain in the interval 223–377; that stretch reads GISTAIIGRP…IEERINNLFF (155 aa). K(+) is bound at residue asparagine 233. Residues 233–238, 252–258, and 277–280 contribute to the GTP site; these read NVGKSS, TDIAGTT, and DTAG. Serine 237 is a binding site for Mg(2+). K(+) contacts are provided by threonine 252, isoleucine 254, and threonine 257. A Mg(2+)-binding site is contributed by threonine 258. Lysine 457 is a binding site for (6S)-5-formyl-5,6,7,8-tetrahydrofolate.

It belongs to the TRAFAC class TrmE-Era-EngA-EngB-Septin-like GTPase superfamily. TrmE GTPase family. Homodimer. Heterotetramer of two MnmE and two MnmG subunits. K(+) is required as a cofactor.

It is found in the cytoplasm. In terms of biological role, exhibits a very high intrinsic GTPase hydrolysis rate. Involved in the addition of a carboxymethylaminomethyl (cmnm) group at the wobble position (U34) of certain tRNAs, forming tRNA-cmnm(5)s(2)U34. This chain is tRNA modification GTPase MnmE, found in Streptococcus pneumoniae (strain Hungary19A-6).